A 122-amino-acid chain; its full sequence is Protein preY, mitochondrial (122 aa).

A mitochondrion-targeting transit peptide spans M1 to L40. The region spanning D56–Q102 is the TRM112 domain.

The protein belongs to the PREY family.

The protein resides in the mitochondrion. Functionally, in mitochondria, S-adenosylmethionine-dependent methyltransferase chaperone that supports both coenzyme Q biosynthesis and NADH:ubiquinone oxidoreductase complex (complex I, MT-ND1) assembly. This Xenopus tropicalis (Western clawed frog) protein is Protein preY, mitochondrial (pyurf).